The following is a 253-amino-acid chain: NAC transcription factor 32 (253 aa).

The NAC domain occupies 10 to 160 (FPPGFRFHPT…DWVLCRIYNK (151 aa)). The DNA-binding element occupies 106-166 (VGIKKALVFY…IYNKKGVIEK (61 aa)).

As to expression, expressed in germinating seeds, roots, leaf veins, open flowers and silique stalks.

The protein localises to the nucleus. In terms of biological role, transcriptional activator that positively regulates age-dependent senescence, dark-induced leaf senescence and stress-induced senescence. Regulates leaf senescence through the modulation of the expression of senescence-associated genes SGR1/NYE1, SAG113 and SAUR36/SAG201, which are involved in chlorophyll degradation, and abscisic acid (ABA) and auxin promotion of senescence, respectively. Promotes reactive oxygen species (ROS) production during age-dependent and stress-induced senescence. Positively regulates auxin-mediated responses in roots. Stress-responsive NAC transcription factor involved in ABA-inducible leaf senescence signaling. Required for normal seed development and morphology. This is NAC transcription factor 32 from Arabidopsis thaliana (Mouse-ear cress).